Here is a 423-residue protein sequence, read N- to C-terminus: MFS-type transporter phiL (423 aa).

The next 3 membrane-spanning stretches (helical) occupy residues Ile-25–Ile-45, Ile-82–Val-102, and Tyr-111–Phe-131. N-linked (GlcNAc...) asparagine glycans are attached at residues Asn-141 and Asn-151. Residues Asp-166 to Asn-185 form a disordered region. A run of 4 helical transmembrane segments spans residues Val-203–Tyr-223, Leu-238–Val-258, Ile-298–Ser-318, and Leu-321–Tyr-341. Residue Asn-352 is glycosylated (N-linked (GlcNAc...) asparagine). Transmembrane regions (helical) follow at residues Leu-369–Trp-389 and Thr-390–Phe-410.

It belongs to the major facilitator superfamily. CAR1 family.

Its subcellular location is the membrane. Functionally, MFS-type transporter; part of the gene cluster that mediates the biosynthesis of the antihypercholesterolemic agents phomoidrides which are dimeric anhydrides. The polypeptide is MFS-type transporter phiL (Fungal sp. (strain ATCC 74256)).